Consider the following 493-residue polypeptide: MSAKLTLESIAKTFAETSIFAILFLIIVILNLGLLVFLAYQYRVYKKKQRANLTKQTYNNDYGQIVNLKQQNGAKIKELANLKDQLSELGQKFNTTLSEIINKPLVNVIDEYLDEQFKQAANFREAELNAVLDSNDQKTVFHKRLFNKFHFGVDKLANINVKNPLNLCWVDSASFTVIESDFRKLNGVGGINKKLLIEKLRIEDIIFTNIDKKYYEVQILSDSPVKVQKTVLTIRNILINDYVDNEKIESYAREANGYFNDHCKLIGKQVLERLNIFEISPKLHKFFGLLAFRYSFGQNVLSHCLETGFLTAYLALLVNFKPDVALKCGLYHDIGKADDENGKKNHTVTGAKIGDEFYFENDVKYTIANHHNKNVDNVYCRLTQIGDKLSAGRLGARSDSSVLFSQLKQELKQIVEETLAQFKTTILLGQSGRRLVIWLETNQHNNIIDNQQLTDLATTIKSKIVQNNITNRFPIKVVLRYNFEHSFDTKDKN.

A helical membrane pass occupies residues 19-39 (IFAILFLIIVILNLGLLVFLA). One can recognise a KH domain in the interval 172–241 (SASFTVIESD…LTIRNILIND (70 aa)). In terms of domain architecture, HD spans 300-392 (VLSHCLETGF…TQIGDKLSAG (93 aa)).

This sequence belongs to the RNase Y family.

Its subcellular location is the cell membrane. Endoribonuclease that initiates mRNA decay. The polypeptide is Ribonuclease Y (Mycoplasma pneumoniae (strain ATCC 29342 / M129 / Subtype 1) (Mycoplasmoides pneumoniae)).